The chain runs to 70 residues: ATP synthase subunit c (70 aa).

The next 2 helical transmembrane spans lie at 1–21 (MNFL…SYGN) and 47–67 (FIGV…SFLI).

Belongs to the ATPase C chain family. As to quaternary structure, F-type ATPases have 2 components, F(1) - the catalytic core - and F(0) - the membrane proton channel. F(1) has five subunits: alpha(3), beta(3), gamma(1), delta(1), epsilon(1). F(0) has three main subunits: a(1), b(2) and c(10-14). The alpha and beta chains form an alternating ring which encloses part of the gamma chain. F(1) is attached to F(0) by a central stalk formed by the gamma and epsilon chains, while a peripheral stalk is formed by the delta and b chains.

Its subcellular location is the cell membrane. Its function is as follows. F(1)F(0) ATP synthase produces ATP from ADP in the presence of a proton or sodium gradient. F-type ATPases consist of two structural domains, F(1) containing the extramembraneous catalytic core and F(0) containing the membrane proton channel, linked together by a central stalk and a peripheral stalk. During catalysis, ATP synthesis in the catalytic domain of F(1) is coupled via a rotary mechanism of the central stalk subunits to proton translocation. Functionally, key component of the F(0) channel; it plays a direct role in translocation across the membrane. A homomeric c-ring of between 10-14 subunits forms the central stalk rotor element with the F(1) delta and epsilon subunits. The polypeptide is ATP synthase subunit c (Latilactobacillus sakei subsp. sakei (strain 23K) (Lactobacillus sakei subsp. sakei)).